Here is a 1034-residue protein sequence, read N- to C-terminus: Integrin alpha-V (1034 aa).

Residues 1–19 (MAALRASLLLSCALTAARA) form the signal peptide. Over 20–978 (FNLDAERPAV…WGIQPQPMPV (959 aa)) the chain is Extracellular. FG-GAP repeat units follow at residues 21–86 (NLDA…RNCQ), 97–158 (DFAP…VEYA), 161–213 (RSTT…LAKY), 225–279 (QLAT…GKNM), 280–345 (SSMY…GGFQ), 346–403 (IAKL…GLNA), and 407–470 (RILE…VNPT). Asn-62 carries an N-linked (GlcNAc...) asparagine glycan. Cystine bridges form between Cys-77/Cys-85, Cys-126/Cys-146, and Cys-160/Cys-173. Ca(2+) is bound by residues Asp-248, Asp-252, Ile-254, and Asp-256. N-linked (GlcNAc...) asparagine glycosylation is found at Asn-278 and Asn-284. Residues Asp-302, Asn-304, Asp-306, Tyr-308, Asp-310, Asp-367, Asp-369, Asp-371, Phe-373, Asp-375, Asp-431, Asp-433, Asn-435, Tyr-437, and Asp-439 each coordinate Ca(2+). Disulfide bonds link Cys-479-Cys-488 and Cys-494-Cys-551. N-linked (GlcNAc...) asparagine glycosylation is found at Asn-540 and Asn-601. Disulfide bonds link Cys-612-Cys-618 and Cys-684-Cys-697. Asn-690, Asn-821, Asn-837, and Asn-860 each carry an N-linked (GlcNAc...) asparagine glycan. Intrachain disulfides connect Cys-838–Cys-900 and Cys-890–Cys-895. Residues Asn-931, Asn-951, Asn-959, and Asn-966 are each glycosylated (N-linked (GlcNAc...) asparagine). A helical membrane pass occupies residues 979 to 1002 (PVWVIILAVLAGLLLLAVLVLVMY). At 1003–1034 (RMGFFKRVRPPQEEQEREQLQPHENGEGTSEA) the chain is on the cytoplasmic side. The short motif at 1005–1009 (GFFKR) is the GFFKR motif element. Residues 1013-1028 (PQEEQEREQLQPHENG) are compositionally biased toward basic and acidic residues. The interval 1013–1034 (PQEEQEREQLQPHENGEGTSEA) is disordered.

This sequence belongs to the integrin alpha chain family. As to quaternary structure, heterodimer of an alpha and a beta subunit. The alpha subunit is composed of a heavy and a light chain linked by a disulfide bond. Alpha-V (ITGAV) associates with either beta-1 (ITGB1), beta-3 (ITGB3), beta-5 (ITGB5), beta-6 (ITGB6) or beta-8 (ITGB8). Interacts with RAB25. Interacts with CIB1. Integrins ITGAV:ITGB3 and ITGAV:ITGB5 interact with FBLN5 (via N-terminus). ITGAV:ITGB3 and ITGAV:ITGB5 interact with CCN3. ITGAV:ITGB3 interacts with ADGRA2. ITGAV:ITGB3 interacts with FGF2; it is likely that FGF2 can simultaneously bind ITGAV:ITGB3 and FGF receptors. ITGAV:ITGB3 is found in a ternary complex with CX3CR1 and CX3CL1. ITGAV:ITGB3 is found in a ternary complex with NRG1 and ERBB3. ITGAV:ITGB3 is found in a ternary complex with FGF1 and FGFR1. ITGAV:ITGB3 is found in a ternary complex with IGF1 and IGF1R. ITGAV:ITGB3 interacts with IGF2. ITGAV:ITGB3 and ITGAV:ITGB6 interact with FBN1. ITGAV:ITGB3 interacts with CD9, CD81 and CD151 (via second extracellular domain). ITGAV:ITGB6 interacts with TGFB1.

It is found in the membrane. The protein resides in the cell junction. It localises to the focal adhesion. Its function is as follows. The alpha-V (ITGAV) integrins are receptors for vitronectin, cytotactin, fibronectin, fibrinogen, laminin, matrix metalloproteinase-2, osteopontin, osteomodulin, prothrombin, thrombospondin, TGFB1 and vWF. They recognize the sequence R-G-D in a wide array of ligands. Alpha-V integrins may play a role in embryo implantation, angiogenesis and wound healing. ITGAV:ITGB3 binds to fractalkine (CX3CL1) and may act as its coreceptor in CX3CR1-dependent fractalkine signaling. ITGAV:ITGB3 binds to NRG1 (via EGF domain) and this binding is essential for NRG1-ERBB signaling. ITGAV:ITGB3 binds to FGF1 and this binding is essential for FGF1 signaling. ITGAV:ITGB3 binds to FGF2 and this binding is essential for FGF2 signaling. ITGAV:ITGB3 binds to IGF1 and this binding is essential for IGF1 signaling. ITGAV:ITGB3 binds to IGF2 and this binding is essential for IGF2 signaling. ITGAV:ITGB3 binds to IL1B and this binding is essential for IL1B signaling. ITGAV:ITGB3 binds to PLA2G2A via a site (site 2) which is distinct from the classical ligand-binding site (site 1) and this induces integrin conformational changes and enhanced ligand binding to site 1. ITGAV:ITGB3 and ITGAV:ITGB6 act as receptors for fibrillin-1 (FBN1) and mediate R-G-D-dependent cell adhesion to FBN1. Integrin alpha-V/beta-6 or alpha-V/beta-8 (ITGAV:ITGB6 or ITGAV:ITGB8) mediates R-G-D-dependent release of transforming growth factor beta-1 (TGF-beta-1) from regulatory Latency-associated peptide (LAP), thereby playing a key role in TGF-beta-1 activation. ITGAV:ITGB3 acts as a receptor for CD40LG. ITGAV:ITGB3 acts as a receptor for IBSP and promotes cell adhesion and migration to IBSP. The sequence is that of Integrin alpha-V (ITGAV) from Gallus gallus (Chicken).